Reading from the N-terminus, the 245-residue chain is Uridylate kinase (245 aa).

ATP is bound at residue 15-18; sequence KLSG. The tract at residues 23-28 is involved in allosteric activation by GTP; that stretch reads GDEGFG. Position 57 (glycine 57) interacts with UMP. The ATP site is built by glycine 58 and arginine 62. UMP is bound by residues aspartate 77 and 138 to 145; that span reads TGNPFCTT. 3 residues coordinate ATP: threonine 165, tyrosine 171, and aspartate 174.

The protein belongs to the UMP kinase family. In terms of assembly, homohexamer.

The protein localises to the cytoplasm. It catalyses the reaction UMP + ATP = UDP + ADP. It functions in the pathway pyrimidine metabolism; CTP biosynthesis via de novo pathway; UDP from UMP (UMPK route): step 1/1. With respect to regulation, allosterically activated by GTP. Inhibited by UTP. Functionally, catalyzes the reversible phosphorylation of UMP to UDP. The sequence is that of Uridylate kinase from Shewanella sp. (strain W3-18-1).